A 442-amino-acid polypeptide reads, in one-letter code: Pentatricopeptide repeat-containing protein At2g27800, mitochondrial (442 aa).

A mitochondrion-targeting transit peptide spans 1–67 (MSATRSTFLG…SFLPSIHVRF (67 aa)). 6 PPR repeats span residues 206 to 236 (NENL…MVTS), 244 to 286 (TIRT…GIEP), 287 to 322 (DVFA…DCEP), 323 to 357 (NSFT…GFVP), 358 to 392 (NGKS…GRVV), and 393 to 427 (DFIS…QLVD).

This sequence belongs to the PPR family. P subfamily.

It localises to the mitochondrion. In Arabidopsis thaliana (Mouse-ear cress), this protein is Pentatricopeptide repeat-containing protein At2g27800, mitochondrial.